Here is a 184-residue protein sequence, read N- to C-terminus: Putative serine carboxypeptidase-like 52 (184 aa).

The N-terminal stretch at 1–22 (MRTFSPKLLLLLLLVLRHHAES) is a signal peptide. Residue asparagine 93 is glycosylated (N-linked (GlcNAc...) asparagine).

The protein belongs to the peptidase S10 family.

The protein resides in the secreted. This is Putative serine carboxypeptidase-like 52 (SCPL52) from Arabidopsis thaliana (Mouse-ear cress).